The following is a 163-amino-acid chain: EF-hand calcium-binding domain-containing protein 11 (163 aa).

EF-hand domains lie at 18–53, 91–126, and 127–162; these read SEHR…LFGY, RYRN…VAPK, and LPER…GQKE. Residues Asp-140, Asp-142, Asp-144, His-146, and Asp-151 each coordinate Ca(2+).

The protein is EF-hand calcium-binding domain-containing protein 11 (EFCAB11) of Homo sapiens (Human).